The following is a 249-amino-acid chain: tRNA pseudouridine synthase A (249 aa).

Asp-53 acts as the Nucleophile in catalysis. Tyr-111 lines the substrate pocket.

The protein belongs to the tRNA pseudouridine synthase TruA family. In terms of assembly, homodimer.

The catalysed reaction is uridine(38/39/40) in tRNA = pseudouridine(38/39/40) in tRNA. Formation of pseudouridine at positions 38, 39 and 40 in the anticodon stem and loop of transfer RNAs. This chain is tRNA pseudouridine synthase A, found in Streptococcus equi subsp. zooepidemicus (strain MGCS10565).